Reading from the N-terminus, the 180-residue chain is Trichosurin (180 aa).

A signal peptide spans 1–15 (MKLLLLSMGLALVCG). N67 and N148 each carry an N-linked (GlcNAc...) asparagine glycan. C87 and C180 are oxidised to a cystine.

It belongs to the calycin superfamily. Lipocalin family. Homodimer. As to expression, milk.

Its subcellular location is the secreted. The protein is Trichosurin of Trichosurus vulpecula (Brush-tailed possum).